An 806-amino-acid polypeptide reads, in one-letter code: Transitional endoplasmic reticulum ATPase (806 aa).

Ser3 is modified (phosphoserine). Residues 247-253 (PGTGKTL), Asn348, His384, and 521-526 (GCGKTL) each bind ATP. Disordered stretches follow at residues 708 to 727 (RRER…EDDP) and 768 to 806 (FGSF…DLYG). The segment covering 768-778 (FGSFRFPSSNQ) has biased composition (low complexity). Residues 779 to 794 (GGSGPSQGSSGGGGGN) show a composition bias toward gly residues.

The protein belongs to the AAA ATPase family. As to quaternary structure, homohexamer.

The protein resides in the cytoplasm. It is found in the cytosol. It localises to the endoplasmic reticulum. The protein localises to the nucleus. The enzyme catalyses ATP + H2O = ADP + phosphate + H(+). Its function is as follows. Necessary for the fragmentation of Golgi stacks during mitosis and for their reassembly after mitosis. Involved in the formation of the nuclear envelope, and of the transitional endoplasmic reticulum (tER). The transfer of membranes from the endoplasmic reticulum to the Golgi apparatus occurs via 50-70 nm transition vesicles which derive from part-rough, part-smooth transitional elements of the endoplasmic reticulum (tER). Vesicle budding from the tER is an ATP-dependent process. Also involved in DNA damage response: recruited to double-strand breaks (DSBs) sites and promotes the recruitment of tp53bp1 at DNA damage sites. Together with sprtn metalloprotease, involved in the repair of covalent DNA-protein cross-links (DPCs) during DNA synthesis. Involved in interstrand cross-link repair in response to replication stress by mediating unloading of the ubiquitinated CMG helicase complex. Enhances cell cycle progression and inhibits apoptosis at low temperatures. Essential for the maturation of ubiquitin-containing autophagosomes and the clearance of ubiquitinated protein by autophagy. Acts as a negative regulator of type I interferon production by promoting ubiquitination of RIGI. May play a role in the ubiquitin-dependent sorting of membrane proteins to lysosomes where they undergo degradation. May more particularly play a role in caveolins sorting in cells. By controlling the steady-state expression of the IGF1R receptor, indirectly regulates the insulin-like growth factor receptor signaling pathway. In Danio rerio (Zebrafish), this protein is Transitional endoplasmic reticulum ATPase.